Consider the following 326-residue polypeptide: tRNA-modifying protein YgfZ (326 aa).

The folate site is built by Trp-27 and Trp-189.

It belongs to the tRNA-modifying YgfZ family.

The protein localises to the cytoplasm. In terms of biological role, folate-binding protein involved in regulating the level of ATP-DnaA and in the modification of some tRNAs. It is probably a key factor in regulatory networks that act via tRNA modification, such as initiation of chromosomal replication. This Shigella sonnei (strain Ss046) protein is tRNA-modifying protein YgfZ.